We begin with the raw amino-acid sequence, 609 residues long: Putative transcriptional regulatory protein y4pA (609 aa).

The Sigma-54 factor interaction domain maps to 313-533 (IVGRSPSIQQ…LRSVLETAAI (221 aa)). Position 395-404 (395-404 (HPKATLLIES)) interacts with ATP. Positions 578 to 597 (RGEAARYLGISRKTLYNKMR) form a DNA-binding region, H-T-H motif.

In terms of biological role, probable transcriptional regulator that acts in conjunction with sigma-54. The protein is Putative transcriptional regulatory protein y4pA of Sinorhizobium fredii (strain NBRC 101917 / NGR234).